The sequence spans 182 residues: Dual-action ribosomal maturation protein DarP (182 aa).

Residues M1–H25 form a disordered region.

Belongs to the DarP family.

The protein localises to the cytoplasm. In terms of biological role, member of a network of 50S ribosomal subunit biogenesis factors which assembles along the 30S-50S interface, preventing incorrect 23S rRNA structures from forming. Promotes peptidyl transferase center (PTC) maturation. The protein is Dual-action ribosomal maturation protein DarP of Nitrosospira multiformis (strain ATCC 25196 / NCIMB 11849 / C 71).